A 429-amino-acid chain; its full sequence is 3-phosphoshikimate 1-carboxyvinyltransferase (429 aa).

Positions 20, 21, and 25 each coordinate 3-phosphoshikimate. Residue K20 coordinates phosphoenolpyruvate. Residues G89 and R118 each coordinate phosphoenolpyruvate. The 3-phosphoshikimate site is built by S164, S165, Q166, S192, D311, and K338. Q166 is a binding site for phosphoenolpyruvate. D311 serves as the catalytic Proton acceptor. Positions 342 and 384 each coordinate phosphoenolpyruvate.

The protein belongs to the EPSP synthase family. In terms of assembly, monomer.

It localises to the cytoplasm. It carries out the reaction 3-phosphoshikimate + phosphoenolpyruvate = 5-O-(1-carboxyvinyl)-3-phosphoshikimate + phosphate. It functions in the pathway metabolic intermediate biosynthesis; chorismate biosynthesis. Its function is as follows. Catalyzes the transfer of the enolpyruvyl moiety of phosphoenolpyruvate (PEP) to the 5-hydroxyl of shikimate-3-phosphate (S3P) to produce enolpyruvyl shikimate-3-phosphate and inorganic phosphate. This is 3-phosphoshikimate 1-carboxyvinyltransferase from Methanococcus maripaludis (strain DSM 14266 / JCM 13030 / NBRC 101832 / S2 / LL).